We begin with the raw amino-acid sequence, 168 residues long: Large ribosomal subunit protein uL10 (168 aa).

It belongs to the universal ribosomal protein uL10 family. As to quaternary structure, part of the ribosomal stalk of the 50S ribosomal subunit. The N-terminus interacts with L11 and the large rRNA to form the base of the stalk. The C-terminus forms an elongated spine to which L12 dimers bind in a sequential fashion forming a multimeric L10(L12)X complex.

Functionally, forms part of the ribosomal stalk, playing a central role in the interaction of the ribosome with GTP-bound translation factors. The polypeptide is Large ribosomal subunit protein uL10 (Laribacter hongkongensis (strain HLHK9)).